Reading from the N-terminus, the 407-residue chain is 3-oxoacyl-[acyl-carrier-protein] synthase 1 (407 aa).

Residues 1 to 405 enclose the Ketosynthase family 3 (KS3) domain; the sequence is MKRVVITGLG…GTNVSLIIKK (405 aa). Residues cysteine 164, histidine 299, and histidine 335 each act as for beta-ketoacyl synthase activity in the active site.

Belongs to the thiolase-like superfamily. Beta-ketoacyl-ACP synthases family. As to quaternary structure, homodimer.

It localises to the cytoplasm. The enzyme catalyses a fatty acyl-[ACP] + malonyl-[ACP] + H(+) = a 3-oxoacyl-[ACP] + holo-[ACP] + CO2. The catalysed reaction is (3Z)-decenoyl-[ACP] + malonyl-[ACP] + H(+) = 3-oxo-(5Z)-dodecenoyl-[ACP] + holo-[ACP] + CO2. The protein operates within lipid metabolism; fatty acid biosynthesis. Its function is as follows. Involved in the type II fatty acid elongation cycle. Catalyzes the elongation of a wide range of acyl-ACP by the addition of two carbons from malonyl-ACP to an acyl acceptor. Can also use unsaturated fatty acids. Catalyzes a key reaction in unsaturated fatty acid (UFA) synthesis, the elongation of the cis-3-decenoyl-ACP produced by FabA. The chain is 3-oxoacyl-[acyl-carrier-protein] synthase 1 (fabB) from Buchnera aphidicola subsp. Baizongia pistaciae (strain Bp).